Reading from the N-terminus, the 82-residue chain is Exodeoxyribonuclease 7 small subunit (82 aa).

Belongs to the XseB family. In terms of assembly, heterooligomer composed of large and small subunits.

It localises to the cytoplasm. The enzyme catalyses Exonucleolytic cleavage in either 5'- to 3'- or 3'- to 5'-direction to yield nucleoside 5'-phosphates.. Bidirectionally degrades single-stranded DNA into large acid-insoluble oligonucleotides, which are then degraded further into small acid-soluble oligonucleotides. In Mycobacterium marinum (strain ATCC BAA-535 / M), this protein is Exodeoxyribonuclease 7 small subunit.